The chain runs to 151 residues: Regulatory protein RecX (151 aa).

The protein belongs to the RecX family.

Its subcellular location is the cytoplasm. Its function is as follows. Modulates RecA activity. In Prosthecochloris aestuarii (strain DSM 271 / SK 413), this protein is Regulatory protein RecX.